A 251-amino-acid chain; its full sequence is Hydroxyacylglutathione hydrolase (251 aa).

The Zn(2+) site is built by histidine 59, histidine 61, aspartate 63, histidine 64, histidine 118, aspartate 141, and histidine 179.

Belongs to the metallo-beta-lactamase superfamily. Glyoxalase II family. Monomer. It depends on Zn(2+) as a cofactor.

It carries out the reaction an S-(2-hydroxyacyl)glutathione + H2O = a 2-hydroxy carboxylate + glutathione + H(+). Its pathway is secondary metabolite metabolism; methylglyoxal degradation; (R)-lactate from methylglyoxal: step 2/2. Its function is as follows. Thiolesterase that catalyzes the hydrolysis of S-D-lactoyl-glutathione to form glutathione and D-lactic acid. In Prochlorococcus marinus (strain NATL2A), this protein is Hydroxyacylglutathione hydrolase.